Reading from the N-terminus, the 271-residue chain is Mannosyl-3-phosphoglycerate phosphatase (271 aa).

Catalysis depends on D13, which acts as the Nucleophile. Mg(2+)-binding residues include D13, D15, and D214.

It belongs to the HAD-like hydrolase superfamily. MPGP family. Mg(2+) is required as a cofactor.

It localises to the cytoplasm. The enzyme catalyses 2-O-(alpha-D-mannosyl)-3-phosphoglycerate + H2O = (2R)-2-O-(alpha-D-mannosyl)-glycerate + phosphate. The protein is Mannosyl-3-phosphoglycerate phosphatase of Escherichia coli O45:K1 (strain S88 / ExPEC).